The primary structure comprises 261 residues: MAYKPQFYPSATKVAENRRNHINPAFELEKLREIPDEDVVKIMGHRQPSEDYKTVHPPLEEMDLAEDYVRDLVGPINGAKEGHRIRYIQFADSMYFAPSQPYDRSRLYMSRFRGVDCGTLSGRQVVELRESNLEDISKNYLVDTELFDPATTGMRGATVHGHSLRLDENGVMFDALQRYEFDEATGHILYVKDQVGRPWDEPVDVGEPVPQEKLKEITTIYRKDGVAMRDDMEVVEVVKRIHRARTLGGYCPLNEIFDTYL.

Arginine 123 is a binding site for coenzyme M.

It belongs to the methyl-coenzyme M reductase gamma subunit family. In terms of assembly, MCR is a hexamer of two alpha, two beta, and two gamma chains, forming a dimer of heterotrimers. Coenzyme F430 serves as cofactor.

The protein localises to the cytoplasm. The catalysed reaction is coenzyme B + methyl-coenzyme M = methane + coenzyme M-coenzyme B heterodisulfide. The protein operates within one-carbon metabolism; methyl-coenzyme M reduction; methane from methyl-coenzyme M: step 1/1. Its function is as follows. Component of the methyl-coenzyme M reductase (MCR) I that catalyzes the reductive cleavage of methyl-coenzyme M (CoM-S-CH3 or 2-(methylthio)ethanesulfonate) using coenzyme B (CoB or 7-mercaptoheptanoylthreonine phosphate) as reductant which results in the production of methane and the mixed heterodisulfide of CoB and CoM (CoM-S-S-CoB). This is the final step in methanogenesis. The sequence is that of Methyl-coenzyme M reductase subunit gamma (mcrG) from Methanococcus voltae.